The primary structure comprises 215 residues: MFPLLGLFGGTFDPIHKGHLALANELIQKLPSLTEIQFIPSRQPPHRPSPLASPADRLEMIKRAIANQPNLILNDVEIKGNDISYTINTLKILRPLFLTHALCFILSTDAFADFKHWHQSSVILEYCHLIVVNRPNYRLPQQPWLSDLLSHHQTENAEDLGRFQFGKIFFQTLSPRPISATQIRHYLAKGDYEIVAPLLPKTVLTYIKAHKLYQQ.

It belongs to the NadD family.

The enzyme catalyses nicotinate beta-D-ribonucleotide + ATP + H(+) = deamido-NAD(+) + diphosphate. It participates in cofactor biosynthesis; NAD(+) biosynthesis; deamido-NAD(+) from nicotinate D-ribonucleotide: step 1/1. Catalyzes the reversible adenylation of nicotinate mononucleotide (NaMN) to nicotinic acid adenine dinucleotide (NaAD). This is Probable nicotinate-nucleotide adenylyltransferase from Coxiella burnetii (strain RSA 331 / Henzerling II).